The chain runs to 460 residues: C4-dicarboxylate transport protein (460 aa).

Transmembrane regions (helical) follow at residues Ser-20–Pro-40, Leu-56–Met-76, Tyr-88–Val-108, Ile-153–Gly-173, Ile-200–Ile-220, Leu-234–Cys-254, Val-301–Leu-321, Ile-342–Gly-362, and Ile-364–Ile-384. Residues Pro-438 to Val-460 are disordered.

This sequence belongs to the dicarboxylate/amino acid:cation symporter (DAACS) (TC 2.A.23) family.

The protein localises to the cell inner membrane. Responsible for the transport of dicarboxylates such as succinate, fumarate, and malate from the periplasm across the membrane. The protein is C4-dicarboxylate transport protein of Pseudomonas savastanoi pv. phaseolicola (strain 1448A / Race 6) (Pseudomonas syringae pv. phaseolicola (strain 1448A / Race 6)).